The primary structure comprises 134 residues: Profilin-3 (134 aa).

Cysteines 13 and 118 form a disulfide. The Involved in PIP2 interaction signature appears at 84–100 (AVIRGKKGSGGITIKKT). Thr114 is subject to Phosphothreonine.

The protein belongs to the profilin family. Occurs in many kinds of cells as a complex with monomeric actin in a 1:1 ratio. Phosphorylated by MAP kinases.

It is found in the cytoplasm. The protein resides in the cytoskeleton. Functionally, binds to actin and affects the structure of the cytoskeleton. At high concentrations, profilin prevents the polymerization of actin, whereas it enhances it at low concentrations. The protein is Profilin-3 of Olea europaea (Common olive).